We begin with the raw amino-acid sequence, 1849 residues long: UPF0606 protein KIAA1549L (1849 aa).

Polar residues predominate over residues 1 to 10 (MDHTASQNAQ). 4 disordered regions span residues 1–70 (MDHT…LLQL), 142–166 (ATAN…PALS), 213–242 (PTEN…PATR), and 529–586 (RHSV…ERNA). Polar residues-rich tracts occupy residues 529-541 (RHSV…QLPN) and 552-586 (PGPT…ERNA). A coiled-coil region spans residues 958–986 (KFAQTMEQRLQKAFQDAERKVLNTKSNLT). Residues 1180 to 1200 (LWIIAAVLAPIAVVTVIIIII) form a helical membrane-spanning segment. Disordered stretches follow at residues 1258–1338 (LPIR…EEEG), 1460–1546 (SKNR…SQPS), 1656–1679 (RSTS…AQLH), and 1769–1819 (SRYP…APLT). 3 stretches are compositionally biased toward polar residues: residues 1290–1319 (PSEN…AQQK), 1463–1482 (RQQM…SPSP), and 1537–1546 (ETSTLSSQPS). 2 stretches are compositionally biased toward low complexity: residues 1769–1786 (SRYP…YSQP) and 1795–1809 (QAPA…QSLA).

This sequence belongs to the UPF0606 family.

The protein localises to the membrane. In Homo sapiens (Human), this protein is UPF0606 protein KIAA1549L (KIAA1549L).